Reading from the N-terminus, the 470-residue chain is Regulator of microtubule dynamics protein 3 (470 aa).

The Mitochondrial intermembrane segment spans residues 1–12 (MSRLGALGGSRA). Residues 13–35 (GLGLLLGTAAGLGFLCVLYSQRW) form a helical membrane-spanning segment. The Cytoplasmic portion of the chain corresponds to 36 to 470 (KRTQRHGRSH…DLEELEVILG (435 aa)). Phosphoserine occurs at positions 44, 46, 50, and 57. A coiled-coil region spans residues 91-125 (LDRLDFVLTSLMALRREVEELQRSLQGLAGEIVGE). Residues 157–163 (VYFTASS) carry the FFAT motif. T160 carries the post-translational modification Phosphothreonine. Residues 168–205 (TDAESEGGYTTANAESDYERDSDKESGDAEDEVSCETV) form a disordered region. 4 positions are modified to phosphoserine: S183, S193, S212, and S233. Basic and acidic residues predominate over residues 184-194 (DYERDSDKESG).

The protein belongs to the RMDN family. Interacts with PTPN2. Interacts with microtubules. Interacts with VAPB. Interacts (via FFAT motif) with MOSPD2 (via MSP domain). Interacts (via phosphorylated FFAT motif) with MOSPD2, VAPA and VAPB. Post-translationally, phosphorylation at Thr-160 of the FFAT motif activates interaction with MOSPD2, VAPA and VAPB.

Its subcellular location is the mitochondrion outer membrane. It localises to the cytoplasm. It is found in the nucleus. The protein localises to the cytoskeleton. The protein resides in the spindle. Its subcellular location is the spindle pole. Its function is as follows. Involved in cellular calcium homeostasis regulation. May participate in differentiation and apoptosis of keratinocytes. Overexpression induces apoptosis. The chain is Regulator of microtubule dynamics protein 3 from Mus musculus (Mouse).